The following is a 499-amino-acid chain: Probable cytosol aminopeptidase (499 aa).

Residues K267 and D272 each coordinate Mn(2+). The active site involves K279. Mn(2+) is bound by residues D290, D349, and E351. Residue R353 is part of the active site.

It belongs to the peptidase M17 family. Mn(2+) is required as a cofactor.

It is found in the cytoplasm. The enzyme catalyses Release of an N-terminal amino acid, Xaa-|-Yaa-, in which Xaa is preferably Leu, but may be other amino acids including Pro although not Arg or Lys, and Yaa may be Pro. Amino acid amides and methyl esters are also readily hydrolyzed, but rates on arylamides are exceedingly low.. It catalyses the reaction Release of an N-terminal amino acid, preferentially leucine, but not glutamic or aspartic acids.. Its function is as follows. Presumably involved in the processing and regular turnover of intracellular proteins. Catalyzes the removal of unsubstituted N-terminal amino acids from various peptides. The protein is Probable cytosol aminopeptidase of Buchnera aphidicola subsp. Acyrthosiphon pisum (strain 5A).